The sequence spans 120 residues: Insulin-like peptide 3 (120 aa).

Positions 1-29 (MGIEMRCQDRRILLPSLLLLILMIGGVQA) are cleaved as a signal peptide. 3 disulfide bridges follow: cysteine 34–cysteine 101, cysteine 46–cysteine 114, and cysteine 100–cysteine 105. The propeptide at 51–89 (NAMTKRTLDPVNFNQIDGFEDRSLLERLLSDSSVQMLKT) is connecting peptide.

The protein belongs to the insulin family. In terms of assembly, heterodimer of a B chain and an A chain linked by two disulfide bonds. In terms of tissue distribution, expressed at a high level in seven cells of each larval brain hemisphere that may correspond to neurosecretory cells.

The protein resides in the secreted. Functionally, possible ligand of InR/insulin-like receptor. The protein is Insulin-like peptide 3 of Drosophila melanogaster (Fruit fly).